The primary structure comprises 161 residues: MSGALSEAGAGPRPVVIHTDGACSGNPGPGGWGAILKFGDTEKELKGGEAHTTNNRMELLAAISALEALTRPCTVDLYTDSQYVKNGIGSWIHNWKRNGWKTADKKPVKNVDLWQRLDAALKSHQVRWHWVKGHAGHDENERADQLARDGLTENRMKSRIG.

An RNase H type-1 domain is found at 11-152 (GPRPVVIHTD…ADQLARDGLT (142 aa)). Positions 20, 58, 80, and 144 each coordinate Mg(2+). A disordered region spans residues 137–161 (HDENERADQLARDGLTENRMKSRIG).

Belongs to the RNase H family. In terms of assembly, monomer. Requires Mg(2+) as cofactor.

Its subcellular location is the cytoplasm. It carries out the reaction Endonucleolytic cleavage to 5'-phosphomonoester.. In terms of biological role, endonuclease that specifically degrades the RNA of RNA-DNA hybrids. This Rhodopseudomonas palustris (strain HaA2) protein is Ribonuclease H.